Here is a 375-residue protein sequence, read N- to C-terminus: 23S rRNA (uracil(747)-C(5))-methyltransferase RlmC (375 aa).

Residues C3, C11, C14, and C87 each coordinate [4Fe-4S] cluster. 4 residues coordinate S-adenosyl-L-methionine: Q212, F241, E262, and N307. The active-site Nucleophile is the C334.

The protein belongs to the class I-like SAM-binding methyltransferase superfamily. RNA M5U methyltransferase family. RlmC subfamily.

It catalyses the reaction uridine(747) in 23S rRNA + S-adenosyl-L-methionine = 5-methyluridine(747) in 23S rRNA + S-adenosyl-L-homocysteine + H(+). Its function is as follows. Catalyzes the formation of 5-methyl-uridine at position 747 (m5U747) in 23S rRNA. The protein is 23S rRNA (uracil(747)-C(5))-methyltransferase RlmC of Escherichia fergusonii (strain ATCC 35469 / DSM 13698 / CCUG 18766 / IAM 14443 / JCM 21226 / LMG 7866 / NBRC 102419 / NCTC 12128 / CDC 0568-73).